The sequence spans 221 residues: Small ribosomal subunit protein uS5 (221 aa).

The interval 1–40 (MMAQRNSGAPDNAGGSNDGREGGRGRRDNRDDRRGGRDNA) is disordered. Basic and acidic residues predominate over residues 18–40 (DGREGGRGRRDNRDDRRGGRDNA). The 64-residue stretch at 45–108 (YLERVVTINR…DEARKNFFRV (64 aa)) folds into the S5 DRBM domain.

This sequence belongs to the universal ribosomal protein uS5 family. In terms of assembly, part of the 30S ribosomal subunit. Contacts proteins S4 and S8.

Its function is as follows. With S4 and S12 plays an important role in translational accuracy. Functionally, located at the back of the 30S subunit body where it stabilizes the conformation of the head with respect to the body. This Mycobacteroides abscessus (strain ATCC 19977 / DSM 44196 / CCUG 20993 / CIP 104536 / JCM 13569 / NCTC 13031 / TMC 1543 / L948) (Mycobacterium abscessus) protein is Small ribosomal subunit protein uS5.